The primary structure comprises 915 residues: Mitogen-activated protein kinase kinae kinase MST11 (915 aa).

Disordered stretches follow at residues 1-65, 134-171, and 183-249; these read MAML…PKHW, KKRN…NPSV, and GMAY…TRTD. Residues 26-45 are compositionally biased toward low complexity; sequence AQASYPPSRRAPAVPPASQS. In terms of domain architecture, SAM spans 65–128; sequence WDEDKVCEYL…FLSIKKLRTK (64 aa). Composition is skewed to low complexity over residues 152-163 and 188-203; these read SESPSKPFHSSS and PSRP…PLPS. The 91-residue stretch at 263-353 folds into the Ras-associating domain; the sequence is NQDVIRVIST…NRLILRRVPA (91 aa). In terms of domain architecture, Protein kinase spans 641–911; it reads WMKGALIGQG…ADDLMLSPFL (271 aa). Residues 647-655 and Lys670 contribute to the ATP site; that span reads IGQGSFGCV.

Belongs to the protein kinase superfamily. STE Ser/Thr protein kinase family. MAP kinase kinase kinase subfamily. As to quaternary structure, interacts with the adapter protein MST50.

The catalysed reaction is L-seryl-[protein] + ATP = O-phospho-L-seryl-[protein] + ADP + H(+). It carries out the reaction L-threonyl-[protein] + ATP = O-phospho-L-threonyl-[protein] + ADP + H(+). In terms of biological role, mitogen-activated protein kinase kinase kinase; part of the MST11-MST7-PMK1 MAP kinase (MAPK) cascade that is essential for appressorium formation, penetration and invasive growth. The MST11-MST7-PMK1 MAP kinase cascade transduces signals from the cell surface sensors MDB2 and SHO1 that recognize various surface signals such as surface hydrophobicity, cutin monomers, and rice leaf waxes. MST11 acts as the upstream MAPKKK that directly phosphorylates MAPKK MST7. MST11 but not MST7 may also be involved in the OSM1 MAPK pathway in response to osmotic stresses. This is Mitogen-activated protein kinase kinae kinase MST11 from Pyricularia oryzae (strain 70-15 / ATCC MYA-4617 / FGSC 8958) (Rice blast fungus).